Consider the following 308-residue polypeptide: Probable manganese-dependent inorganic pyrophosphatase (308 aa).

The Mn(2+) site is built by His9, Asp13, Asp15, Asp75, His97, and Asp149.

Belongs to the PPase class C family. Requires Mn(2+) as cofactor.

It localises to the cytoplasm. The enzyme catalyses diphosphate + H2O = 2 phosphate + H(+). This chain is Probable manganese-dependent inorganic pyrophosphatase, found in Staphylococcus carnosus (strain TM300).